We begin with the raw amino-acid sequence, 563 residues long: (R)-mandelonitrile lyase 1 (563 aa).

Positions 1-27 (MEKSTMSAILLVLHLFVLLLQYSEVHS) are cleaved as a signal peptide. Residues 63–64 (TS), 82–83 (ER), V129, T133, and 137–140 (NAGV) each bind FAD. 2 N-linked (GlcNAc...) asparagine glycosylation sites follow: N145 and N162. V244 serves as a coordination point for FAD. Position 355 (C355) interacts with substrate. An N-linked (GlcNAc...) asparagine glycan is attached at N379. C426 and C477 are joined by a disulfide. Y484 contributes to the substrate binding site. Residues 485–486 (WH) and G514 contribute to the FAD site. Residue H486 is the Proton donor of the active site. The Proton acceptor role is filled by H524. An FAD-binding site is contributed by 525 to 526 (PQ).

The protein belongs to the GMC oxidoreductase family. Monomer. FAD is required as a cofactor. Glycosylated. Seeds. Localized within cotyledonary parenchyma cells.

It is found in the vacuole. The protein resides in the aleurone grain. It carries out the reaction (R)-mandelonitrile = benzaldehyde + hydrogen cyanide. Involved in cyanogenesis, the release of HCN from injured tissues. Catalyzes the stereospecific addition of HCN to a variety of aldehydes in vitro. It is a major seed constituent, and could have the additional role of a storage form for reduced nitrogen. The sequence is that of (R)-mandelonitrile lyase 1 (MDL1) from Prunus serotina (Black cherry).